We begin with the raw amino-acid sequence, 140 residues long: Small ribosomal subunit protein uS19 (140 aa).

The protein belongs to the universal ribosomal protein uS19 family.

Its function is as follows. Protein S19 forms a complex with S13 that binds strongly to the 16S ribosomal RNA. This Metallosphaera sedula (strain ATCC 51363 / DSM 5348 / JCM 9185 / NBRC 15509 / TH2) protein is Small ribosomal subunit protein uS19.